A 283-amino-acid chain; its full sequence is Aldo-keto reductase Mmcs_1938 (283 aa).

Tyr58 acts as the Proton donor in catalysis. Gly196, Leu198, Val200, Ile236, Arg238, Ser239, Ala240, Arg244, Ser247, Asn248, and Arg274 together coordinate NADPH.

This sequence belongs to the aldo/keto reductase family.

The polypeptide is Aldo-keto reductase Mmcs_1938 (Mycobacterium sp. (strain MCS)).